The following is a 415-amino-acid chain: Teichoic acid D-alanyltransferase (415 aa).

Topologically, residues 1–16 (MIDFLKQLPHLEPYGN) are extracellular. Residues 17–36 (PFYFIYLGIALLPIFIGLFF) form a helical membrane-spanning segment. The Cytoplasmic segment spans residues 37–40 (KKRF). A helical transmembrane segment spans residues 41–56 (AIYECLVSITFIVLAL). Residues 57 to 60 (TGTH) lie on the Extracellular side of the membrane. The chain crosses the membrane as a helical span at residues 61–87 (ASQILALLFYIVWQIIWVYSYKRYRSQ). Residues 88 to 90 (RDN) are Cytoplasmic-facing. A helical transmembrane segment spans residues 91 to 115 (KWVFYLHSFLVVLPLILVKVEPTIN). Topologically, residues 116-125 (GTQSLLNFLG) are extracellular. Residues 126 to 142 (ISYLTFRAVGMIIEMRD) traverse the membrane as a helical segment. The Cytoplasmic segment spans residues 143–149 (GVLKEFT). An intramembrane segment occupies 150-179 (LGEFLRFMLFMPTFTSGPIDRFKRFNEDYQ). The Cytoplasmic segment spans residues 180–183 (SIPN). The helical transmembrane segment at 184-227 (RDELLNMLEQAVKYIMLGFLYKFVLAQIFGSMLLPPLKAQALSQ) threads the bilayer. Residues 228–232 (GGIFN) lie on the Extracellular side of the membrane. A helical transmembrane segment spans residues 233-264 (LPTLGVMYVYGFDLFFDFAGYSMFALAVSNLM). Residues 265 to 274 (GIKSPINFDK) are Cytoplasmic-facing. An intramembrane segment occupies 275–311 (PFISRDMKEFWNRWHMSLSFWFRDFVFMRLVIVLMRN). Residues 312–316 (KVFKN) lie on the Cytoplasmic side of the membrane. Residues 317–336 (RNTTSNVAYIINMMVMGFWH) traverse the membrane as a helical segment. H336 is an active-site residue. Residues 337 to 339 (GIT) are Extracellular-facing. The chain crosses the membrane as a helical span at residues 340–373 (WYYIAYGIFHGIGLVINDAWLRKKKTINKDRKKA). Topologically, residues 374–381 (GLKPLPEN) are cytoplasmic. A helical transmembrane segment spans residues 382–404 (KWTKALGIFITFNTVMLSFLIFS). Topologically, residues 405–415 (GFLNDLWFTKK) are extracellular.

Belongs to the membrane-bound acyltransferase family.

Its subcellular location is the cell membrane. Its pathway is cell wall biogenesis; lipoteichoic acid biosynthesis. In terms of biological role, O-acyltransferase that catalyzes D-alanylation of both teichoic acid and lipoteichoic acid (LTA). D-alanylation of LTA plays an important role in modulating the properties of the cell wall in Gram-positive bacteria, influencing the net charge of the cell wall. Catalyzes D-alanylation from DltC carrier protein. This is Teichoic acid D-alanyltransferase from Streptococcus thermophilus (strain ATCC BAA-250 / LMG 18311).